Consider the following 503-residue polypeptide: Maturase K (503 aa).

This sequence belongs to the intron maturase 2 family. MatK subfamily.

It is found in the plastid. It localises to the chloroplast. In terms of biological role, usually encoded in the trnK tRNA gene intron. Probably assists in splicing its own and other chloroplast group II introns. The polypeptide is Maturase K (Liquidambar formosana (Formosan gum)).